The primary structure comprises 110 residues: UPF0060 membrane protein BTH_I2792 (110 aa).

The next 4 membrane-spanning stretches (helical) occupy residues 9–29 (ALFVLTAVAEIVGCYLPWLVL), 34–54 (PVWLLAPAALSLALFAWLLTL), 64–84 (AAYGGVYIAVALAWLRIVDGV), and 86–106 (LSRWDAAGAALALAGMSVIAL).

Belongs to the UPF0060 family.

Its subcellular location is the cell inner membrane. In Burkholderia thailandensis (strain ATCC 700388 / DSM 13276 / CCUG 48851 / CIP 106301 / E264), this protein is UPF0060 membrane protein BTH_I2792.